The following is a 561-amino-acid chain: Type II methyltransferase M.BstVI (561 aa).

Belongs to the N(4)/N(6)-methyltransferase family.

It carries out the reaction a 2'-deoxyadenosine in DNA + S-adenosyl-L-methionine = an N(6)-methyl-2'-deoxyadenosine in DNA + S-adenosyl-L-homocysteine + H(+). Functionally, a gamma subtype methylase, recognizes the double-stranded sequence 5'-CTCGAG-3', methylates A-5 on both strands, and protects the DNA from cleavage by the BstVI endonuclease. This is Type II methyltransferase M.BstVI from Geobacillus stearothermophilus (Bacillus stearothermophilus).